The chain runs to 360 residues: Archaemetzincin-2 (360 aa).

Histidine 254 provides a ligand contact to Zn(2+). Glutamate 255 serves as the catalytic Proton acceptor. Positions 258, 264, 265, 270, 289, and 292 each coordinate Zn(2+).

Belongs to the peptidase M54 family. The cofactor is Zn(2+).

Functionally, probable zinc metalloprotease. The sequence is that of Archaemetzincin-2 (AMZ2) from Macaca fascicularis (Crab-eating macaque).